Reading from the N-terminus, the 419-residue chain is Imidazolonepropionase (419 aa).

Residues His-84 and His-86 each contribute to the Fe(3+) site. His-84 and His-86 together coordinate Zn(2+). The 4-imidazolone-5-propanoate site is built by Arg-93, Tyr-156, and His-189. Residue Tyr-156 coordinates N-formimidoyl-L-glutamate. His-254 is a Fe(3+) binding site. His-254 serves as a coordination point for Zn(2+). Gln-257 lines the 4-imidazolone-5-propanoate pocket. A Fe(3+)-binding site is contributed by Asp-329. Residue Asp-329 participates in Zn(2+) binding. N-formimidoyl-L-glutamate contacts are provided by Asn-331 and Gly-333. Position 334 (Thr-334) interacts with 4-imidazolone-5-propanoate.

This sequence belongs to the metallo-dependent hydrolases superfamily. HutI family. As to quaternary structure, monomer. Forms a tightly packed homodimer in the crystal, but this seems to be an artifact of crystallization. It depends on Zn(2+) as a cofactor. Requires Fe(3+) as cofactor.

The protein localises to the cytoplasm. It catalyses the reaction 4-imidazolone-5-propanoate + H2O = N-formimidoyl-L-glutamate. It functions in the pathway amino-acid degradation; L-histidine degradation into L-glutamate; N-formimidoyl-L-glutamate from L-histidine: step 3/3. Functionally, catalyzes the hydrolytic cleavage of the carbon-nitrogen bond in imidazolone-5-propanoate to yield N-formimidoyl-L-glutamate. It is the third step in the universal histidine degradation pathway. This Agrobacterium fabrum (strain C58 / ATCC 33970) (Agrobacterium tumefaciens (strain C58)) protein is Imidazolonepropionase.